The primary structure comprises 248 residues: Gamma-glutamyl peptidase 2 (248 aa).

Residues 17-212 (SEFVKEMYGG…IDRVHKIKFV (196 aa)) enclose the Glutamine amidotransferase type-1 domain. The active-site Nucleophile is Cys-101. Residues His-191 and Glu-193 contribute to the active site.

This sequence belongs to the peptidase C26 family.

The protein localises to the cytoplasm. It is found in the cytosol. It carries out the reaction an S-[(1E)-1-(hydroxyimino)-omega-(methylsulfanyl)alkyl]-L-glutathione + H2O = an S-[(1E)-1-(hydroxyimino)-omega-(methylsulfanyl)alkyl]-L-cysteinylglycine + L-glutamate. The enzyme catalyses (E)-1-(glutathione-S-yl)-2-(1H-indol-3-yl)acetohydroximate + H2O = (E)-1-(glycyl-L-cystein-S-yl)-2-(1H-indol-3-yl)acetohydroximate + L-glutamate. The catalysed reaction is 2-(glutathion-S-yl)-2-(1H-indol-3-yl)acetonitrile + H2O = 2-(glycyl-L-cystein-S-yl)-2-(1H-indol-3-yl)acetonitrile + L-glutamate. It catalyses the reaction (Z)-1-(glutathione-S-yl)-2-phenylacetohydroximate + H2O = (Z)-1-(glycyl-L-cystein-S-yl)-2-phenylacetohydroximate + L-glutamate. The protein operates within secondary metabolite biosynthesis. In terms of biological role, involved in glucosinolate biosynthesis. Hydrolyzes the gamma-glutamyl peptide bond of several glutathione (GSH) conjugates to produce Cys-Gly conjugates related to glucosinolates. The gamma-Glu-Cys-Gly-GSH conjugates are the sulfur-donating molecule in glucosinolate biosynthesis. The polypeptide is Gamma-glutamyl peptidase 2 (Arabidopsis thaliana (Mouse-ear cress)).